The primary structure comprises 684 residues: Chaperone protein HtpG (684 aa).

Positions 1 to 329 (MSKKGTIGVT…SPDIPLNVSR (329 aa)) are a; substrate-binding. The segment at 330–548 (SYLQSDANVK…FMRRMRDMAQ (219 aa)) is b. Residues 549–684 (LQPGMSFYGE…EFIRRSQRLL (136 aa)) are c.

The protein belongs to the heat shock protein 90 family. In terms of assembly, homodimer.

The protein localises to the cytoplasm. Functionally, molecular chaperone. Has ATPase activity. This Porphyromonas gingivalis (strain ATCC BAA-308 / W83) protein is Chaperone protein HtpG.